A 930-amino-acid chain; its full sequence is Vacuolar membrane protease (930 aa).

A disordered region spans residues 1-28; the sequence is MPQEEVHDTSSVSDDNLTNTGGGGSNYY. The Cytoplasmic segment spans residues 1–49; that stretch reads MPQEEVHDTSSVSDDNLTNTGGGGSNYYNSHNQPNVFVRAIRSIFGYRK. A helical membrane pass occupies residues 50–70; it reads TSLTLFVILTIIFTIALSLYD. Residues 71 to 379 lie on the Vacuolar side of the membrane; sequence NNLDLTIELP…YFFSSPISAL (309 aa). The N-linked (GlcNAc...) asparagine glycan is linked to asparagine 163. 2 residues coordinate Zn(2+): histidine 177 and aspartate 189. Catalysis depends on glutamate 222, which acts as the Proton acceptor. Residues glutamate 223, glutamate 248, and histidine 320 each contribute to the Zn(2+) site. Residue asparagine 354 is glycosylated (N-linked (GlcNAc...) asparagine). Residues 380-400 form a helical membrane-spanning segment; sequence VTINSVLIVLFPILSGPLLFI. Over 401 to 411 the chain is Cytoplasmic; sequence TVRYKKWKIGT. The chain crosses the membrane as a helical span at residues 412-432; it reads SNFLSLPLAIVLTVAIVMIVV. The Vacuolar segment spans residues 433 to 449; that stretch reads NQGFQIANPFLPSSHPL. Residues 450 to 470 form a helical membrane-spanning segment; sequence LLVATTTSISLLIYYVFLNGV. At 471-480 the chain is on the cytoplasmic side; that stretch reads NWVSPSGDQK. A helical transmembrane segment spans residues 481–501; that stretch reads LITIIEISFIYWLILIYVTHG. Residues 502 to 514 lie on the Vacuolar side of the membrane; that stretch reads LSQNKIGDDHTGE. A helical transmembrane segment spans residues 515–535; it reads FPFTVLFFLEATASLFGLIGW. Over 536 to 598 the chain is Cytoplasmic; the sequence is TFSRSIKQSS…FGYDWSLQYL (63 aa). Positions 542–570 are disordered; it reads KQSSNDGSDEPLLTGTAERYGSDDTDEDE. The helical transmembrane segment at 599-619 threads the bilayer; the sequence is LIVPISSLIIFNSGWLVLDGI. Asparagine 620 carries N-linked (GlcNAc...) asparagine glycosylation. Over 620 to 631 the chain is Vacuolar; the sequence is NKSIQESFAAEN. A helical membrane pass occupies residues 632 to 652; the sequence is LIYLLIQLFSQFWILPILPFV. Residues 653 to 657 lie on the Cytoplasmic side of the membrane; the sequence is YKLNR. Residues 658–678 form a helical membrane-spanning segment; it reads FIVFGLTIFAISGVALISFLD. Topologically, residues 679–930 are vacuolar; that stretch reads PFNQENPLKL…LVSVSLKIEV (252 aa). N-linked (GlcNAc...) asparagine glycosylation is found at asparagine 697, asparagine 768, asparagine 808, and asparagine 890.

It belongs to the peptidase M28 family. Requires Zn(2+) as cofactor.

The protein localises to the vacuole membrane. Its function is as follows. May be involved in vacuolar sorting and osmoregulation. The polypeptide is Vacuolar membrane protease (Candida dubliniensis (strain CD36 / ATCC MYA-646 / CBS 7987 / NCPF 3949 / NRRL Y-17841) (Yeast)).